A 155-amino-acid chain; its full sequence is Small ribosomal subunit protein uS7cz/uS7cy (155 aa).

This sequence belongs to the universal ribosomal protein uS7 family. In terms of assembly, part of the 30S ribosomal subunit.

It is found in the plastid. Its subcellular location is the chloroplast. Its function is as follows. One of the primary rRNA binding proteins, it binds directly to 16S rRNA where it nucleates assembly of the head domain of the 30S subunit. The protein is Small ribosomal subunit protein uS7cz/uS7cy (rps7-A) of Morus indica (Mulberry).